Here is a 182-residue protein sequence, read N- to C-terminus: Translation initiation factor IF-3 (182 aa).

A disordered region spans residues 1 to 22; that stretch reads MPLGDCNISTPDNKQNRKNQEI.

It belongs to the IF-3 family. In terms of assembly, monomer.

It localises to the cytoplasm. Its function is as follows. IF-3 binds to the 30S ribosomal subunit and shifts the equilibrium between 70S ribosomes and their 50S and 30S subunits in favor of the free subunits, thus enhancing the availability of 30S subunits on which protein synthesis initiation begins. The sequence is that of Translation initiation factor IF-3 from Xanthomonas axonopodis pv. citri (strain 306).